The sequence spans 353 residues: RNA 3'-terminal phosphate cyclase (353 aa).

Residues Q103 and 297 to 301 (HLADQ) contribute to the ATP site. H322 serves as the catalytic Tele-AMP-histidine intermediate.

It belongs to the RNA 3'-terminal cyclase family. Type 1 subfamily.

The protein localises to the cytoplasm. The enzyme catalyses a 3'-end 3'-phospho-ribonucleotide-RNA + ATP = a 3'-end 2',3'-cyclophospho-ribonucleotide-RNA + AMP + diphosphate. Its function is as follows. Catalyzes the conversion of 3'-phosphate to a 2',3'-cyclic phosphodiester at the end of RNA. The mechanism of action of the enzyme occurs in 3 steps: (A) adenylation of the enzyme by ATP; (B) transfer of adenylate to an RNA-N3'P to produce RNA-N3'PP5'A; (C) and attack of the adjacent 2'-hydroxyl on the 3'-phosphorus in the diester linkage to produce the cyclic end product. The biological role of this enzyme is unknown but it is likely to function in some aspects of cellular RNA processing. This chain is RNA 3'-terminal phosphate cyclase, found in Salmonella heidelberg (strain SL476).